The primary structure comprises 258 residues: Phosphate import ATP-binding protein PstB (258 aa).

The 243-residue stretch at 5–247 folds into the ABC transporter domain; the sequence is LDLKDVNIYY…EKIFSNPTQK (243 aa). An ATP-binding site is contributed by 37 to 44; sequence GPSGCGKS.

Belongs to the ABC transporter superfamily. Phosphate importer (TC 3.A.1.7) family. As to quaternary structure, the complex is composed of two ATP-binding proteins (PstB), two transmembrane proteins (PstC and PstA) and a solute-binding protein (PstS).

It localises to the cell membrane. The catalysed reaction is phosphate(out) + ATP + H2O = ADP + 2 phosphate(in) + H(+). In terms of biological role, part of the ABC transporter complex PstSACB involved in phosphate import. Responsible for energy coupling to the transport system. This chain is Phosphate import ATP-binding protein PstB, found in Rhodococcus jostii (strain RHA1).